Consider the following 92-residue polypeptide: DNA/RNA-binding protein Alba (92 aa).

N6-acetyllysine is present on lysine 11.

It belongs to the histone-like Alba family. Acetylated. Acetylation at Lys-11 decreases DNA-binding affinity.

Its subcellular location is the cytoplasm. It localises to the chromosome. Its function is as follows. Binds double-stranded DNA tightly but without sequence specificity. Involved in DNA compaction. The protein is DNA/RNA-binding protein Alba of Pyrobaculum neutrophilum (strain DSM 2338 / JCM 9278 / NBRC 100436 / V24Sta) (Thermoproteus neutrophilus).